The sequence spans 146 residues: Lipoprotein signal peptidase (146 aa).

A run of 3 helical transmembrane segments spans residues 10-30 (GLFV…LGGF), 54-74 (FLEG…LLFL), and 80-100 (FFVA…SNIL). Residues aspartate 110 and aspartate 127 contribute to the active site. A helical membrane pass occupies residues 118-138 (FEFAIFNFADVMIDVAVALFL).

The protein belongs to the peptidase A8 family.

It is found in the cell inner membrane. It carries out the reaction Release of signal peptides from bacterial membrane prolipoproteins. Hydrolyzes -Xaa-Yaa-Zaa-|-(S,diacylglyceryl)Cys-, in which Xaa is hydrophobic (preferably Leu), and Yaa (Ala or Ser) and Zaa (Gly or Ala) have small, neutral side chains.. The protein operates within protein modification; lipoprotein biosynthesis (signal peptide cleavage). Its function is as follows. This protein specifically catalyzes the removal of signal peptides from prolipoproteins. This is Lipoprotein signal peptidase from Wolinella succinogenes (strain ATCC 29543 / DSM 1740 / CCUG 13145 / JCM 31913 / LMG 7466 / NCTC 11488 / FDC 602W) (Vibrio succinogenes).